Here is a 174-residue protein sequence, read N- to C-terminus: Peptide deformylase (174 aa).

Fe cation contacts are provided by cysteine 96 and histidine 138. Glutamate 139 is an active-site residue. Fe cation is bound at residue histidine 142.

Belongs to the polypeptide deformylase family. Fe(2+) is required as a cofactor.

The catalysed reaction is N-terminal N-formyl-L-methionyl-[peptide] + H2O = N-terminal L-methionyl-[peptide] + formate. Functionally, removes the formyl group from the N-terminal Met of newly synthesized proteins. Requires at least a dipeptide for an efficient rate of reaction. N-terminal L-methionine is a prerequisite for activity but the enzyme has broad specificity at other positions. The protein is Peptide deformylase of Helicobacter pylori (strain J99 / ATCC 700824) (Campylobacter pylori J99).